A 339-amino-acid chain; its full sequence is 4-hydroxy-2-oxovalerate aldolase (339 aa).

Positions 8 to 260 (IILHDMCLRD…STDVDVFKLM (253 aa)) constitute a Pyruvate carboxyltransferase domain. 16 to 17 (RD) is a binding site for substrate. D17 lines the Mn(2+) pocket. The active-site Proton acceptor is H20. Substrate is bound by residues S170 and H199. Residues H199 and H201 each coordinate Mn(2+). Y290 is a substrate binding site.

The protein belongs to the 4-hydroxy-2-oxovalerate aldolase family.

The catalysed reaction is (S)-4-hydroxy-2-oxopentanoate = acetaldehyde + pyruvate. The chain is 4-hydroxy-2-oxovalerate aldolase from Shewanella woodyi (strain ATCC 51908 / MS32).